Reading from the N-terminus, the 366-residue chain is Peptide chain release factor 2 (366 aa).

Gln251 is modified (N5-methylglutamine).

This sequence belongs to the prokaryotic/mitochondrial release factor family. In terms of processing, methylated by PrmC. Methylation increases the termination efficiency of RF2.

It is found in the cytoplasm. In terms of biological role, peptide chain release factor 2 directs the termination of translation in response to the peptide chain termination codons UGA and UAA. The protein is Peptide chain release factor 2 (prfB) of Listeria monocytogenes serotype 4b (strain F2365).